The sequence spans 380 residues: Dynactin subunit 2 (380 aa).

A disordered region spans residues 1-40 (MADPKFQNLPGIAYDQPDVYETPDDPETDTSDYYEEEPEN). The span at 21–40 (ETPDDPETDTSDYYEEEPEN) shows a compositional bias: acidic residues. Coiled-coil stretches lie at residues 100 to 135 (VQKC…QSYD) and 353 to 377 (ETFA…TAIS).

The protein belongs to the dynactin subunit 2 family. In terms of assembly, subunit of dynactin, a multiprotein complex associated with dynein.

It localises to the cytoplasm. The protein localises to the cytoskeleton. Its subcellular location is the membrane. In terms of biological role, modulates cytoplasmic dynein binding to an organelle, and plays a role in prometaphase chromosome alignment and spindle organization during mitosis. May play a role in synapse formation during brain development. The chain is Dynactin subunit 2 from Drosophila pseudoobscura pseudoobscura (Fruit fly).